Here is a 390-residue protein sequence, read N- to C-terminus: Queuine tRNA-ribosyltransferase (390 aa).

The active-site Proton acceptor is D92. Substrate contacts are provided by residues 92 to 96, D146, Q195, and G222; that span reads DSGGF. Residues 253–259 form an RNA binding region; that stretch reads GVGTPED. The active-site Nucleophile is D272. The tract at residues 277–281 is RNA binding; important for wobble base 34 recognition; it reads TRNAR. Zn(2+) contacts are provided by C310, C312, C315, and H354.

The protein belongs to the queuine tRNA-ribosyltransferase family. Homodimer. Within each dimer, one monomer is responsible for RNA recognition and catalysis, while the other monomer binds to the replacement base PreQ1. Zn(2+) is required as a cofactor.

It carries out the reaction 7-aminomethyl-7-carbaguanine + guanosine(34) in tRNA = 7-aminomethyl-7-carbaguanosine(34) in tRNA + guanine. It participates in tRNA modification; tRNA-queuosine biosynthesis. In terms of biological role, catalyzes the base-exchange of a guanine (G) residue with the queuine precursor 7-aminomethyl-7-deazaguanine (PreQ1) at position 34 (anticodon wobble position) in tRNAs with GU(N) anticodons (tRNA-Asp, -Asn, -His and -Tyr). Catalysis occurs through a double-displacement mechanism. The nucleophile active site attacks the C1' of nucleotide 34 to detach the guanine base from the RNA, forming a covalent enzyme-RNA intermediate. The proton acceptor active site deprotonates the incoming PreQ1, allowing a nucleophilic attack on the C1' of the ribose to form the product. After dissociation, two additional enzymatic reactions on the tRNA convert PreQ1 to queuine (Q), resulting in the hypermodified nucleoside queuosine (7-(((4,5-cis-dihydroxy-2-cyclopenten-1-yl)amino)methyl)-7-deazaguanosine). This is Queuine tRNA-ribosyltransferase from Acidovorax ebreus (strain TPSY) (Diaphorobacter sp. (strain TPSY)).